Reading from the N-terminus, the 370-residue chain is Cytochrome b (370 aa).

4 consecutive transmembrane segments (helical) span residues Phe25–Val45, Trp69–Ile90, Trp105–Leu125, and Phe170–Met190. Heme b-binding residues include His75 and His89. Heme b contacts are provided by His174 and His188. Residue His193 participates in a ubiquinone binding. 4 consecutive transmembrane segments (helical) span residues Tyr218–Tyr238, Leu280–His300, Phe312–Thr332, and Phe339–Pro358.

The protein belongs to the cytochrome b family. As to quaternary structure, the cytochrome bc1 complex contains 3 respiratory subunits (MT-CYB, CYC1 and UQCRFS1), 2 core proteins (UQCRC1 and UQCRC2) and probably 6 low-molecular weight proteins. It depends on heme b as a cofactor.

It localises to the mitochondrion inner membrane. Its function is as follows. Component of the ubiquinol-cytochrome c reductase complex (complex III or cytochrome b-c1 complex) that is part of the mitochondrial respiratory chain. The b-c1 complex mediates electron transfer from ubiquinol to cytochrome c. Contributes to the generation of a proton gradient across the mitochondrial membrane that is then used for ATP synthesis. The protein is Cytochrome b (MT-CYB) of Corallus hortulanus enydris (Garden tree boa).